The primary structure comprises 210 residues: Prolactin (210 aa).

Positions 1–23 (MTQGSRLYFAVAVLMCGFVSING) are cleaved as a signal peptide. Cystine bridges form between Cys-69-Cys-183 and Cys-200-Cys-210.

It belongs to the somatotropin/prolactin family. In terms of tissue distribution, pituitary gland.

It localises to the secreted. The sequence is that of Prolactin (prl1) from Carassius auratus (Goldfish).